Reading from the N-terminus, the 201-residue chain is Ran-specific GTPase-activating protein 1 (201 aa).

Composition is skewed to basic and acidic residues over residues 1–17 (MSSE…EEAA) and 32–66 (KKAE…IHFE). A disordered region spans residues 1 to 66 (MSSEDKKPVV…APESPDIHFE (66 aa)). S60 bears the Phosphoserine mark. One can recognise a RanBD1 domain in the interval 64–200 (HFEPVVHLEK…FEKAQEINKK (137 aa)).

Belongs to the RANBP1 family. In terms of assembly, interacts with GSP1 and PRP20.

Its subcellular location is the cytoplasm. It localises to the nucleus. Its function is as follows. Important for the export of protein containing nuclear export signal (NES) out of the nucleus. Stimulates the GTPase activity of GSP1 and GSP2. This chain is Ran-specific GTPase-activating protein 1 (YRB1), found in Saccharomyces cerevisiae (strain ATCC 204508 / S288c) (Baker's yeast).